The sequence spans 387 residues: Ferrochelatase (387 aa).

Fe cation-binding residues include histidine 196 and glutamate 277.

The protein belongs to the ferrochelatase family.

The protein localises to the cytoplasm. It carries out the reaction heme b + 2 H(+) = protoporphyrin IX + Fe(2+). It functions in the pathway porphyrin-containing compound metabolism; protoheme biosynthesis; protoheme from protoporphyrin-IX: step 1/1. Functionally, catalyzes the ferrous insertion into protoporphyrin IX. In Synechococcus sp. (strain RCC307), this protein is Ferrochelatase.